A 93-amino-acid chain; its full sequence is Small ribosomal subunit protein uS19 (93 aa).

Belongs to the universal ribosomal protein uS19 family.

Functionally, protein S19 forms a complex with S13 that binds strongly to the 16S ribosomal RNA. The sequence is that of Small ribosomal subunit protein uS19 from Karelsulcia muelleri (strain GWSS) (Sulcia muelleri).